The primary structure comprises 87 residues: Glutaredoxin (87 aa).

One can recognise a Glutaredoxin domain in the interval 1 to 87 (MFKVYGYDSN…GFDQLREYFK (87 aa)). A disulfide bridge connects residues cysteine 14 and cysteine 17.

It belongs to the glutaredoxin family.

Serves as a reducing agent for the phage-induced ribonucleotide reductase, but not for the bacterial ones. This specificity may be the result of sequence differences around the redox-active disulfide bond. The oxidized form accepts electrons from bacterial glutathione and will, in turn, reduce other small disulfides. Can also be reduced by NADPH and by bacterial thioredoxin reductase. The sequence is that of Glutaredoxin (NRDC) from Enterobacteria phage T4 (Bacteriophage T4).